Consider the following 119-residue polypeptide: MICOS complex subunit MIC13 (119 aa).

Residues 1–7 (MVARVWS) lie on the Mitochondrial matrix side of the membrane. Residues 8-26 (LMRFLIKGSVAGGAVYLVY) form a helical membrane-spanning segment. At 27–119 (DQELLGPSDK…GWEYLKEHSK (93 aa)) the chain is on the mitochondrial intermembrane side.

This sequence belongs to the MICOS complex subunit Mic13 family. As to quaternary structure, component of the mitochondrial contact site and cristae organizing system (MICOS) complex, composed of at least MICOS10/MIC10, CHCHD3/MIC19, CHCHD6/MIC25, APOO/MIC26, MICOS13/MIC13, APOOL/MIC27 and IMMT/MIC60. The MICOS complex associates with mitochondrial outer membrane proteins SAMM50, MTX1 and MTX2 (together described as components of the mitochondrial outer membrane sorting assembly machinery (SAM) complex) and DNAJC11, mitochondrial inner membrane protein TMEM11 and with HSPA9. The MICOS and SAM complexes together with DNAJC11 are part of a large protein complex spanning both membranes termed the mitochondrial intermembrane space bridging (MIB) complex.

Its subcellular location is the mitochondrion inner membrane. Its function is as follows. Component of the MICOS complex, a large protein complex of the mitochondrial inner membrane that plays crucial roles in the maintenance of crista junctions, inner membrane architecture, and formation of contact sites to the outer membrane. Constituent of mature MICOS complex, it is required for the formation of cristae junction (CJ) and maintenance of cristae morphology. Required for the incorporation of MICOS10/MIC10 into the MICOS complex. The protein is MICOS complex subunit MIC13 (Micos13) of Mus musculus (Mouse).